The chain runs to 156 residues: Small ribosomal subunit protein uS7 (156 aa).

The protein belongs to the universal ribosomal protein uS7 family. In terms of assembly, part of the 30S ribosomal subunit. Contacts proteins S9 and S11.

In terms of biological role, one of the primary rRNA binding proteins, it binds directly to 16S rRNA where it nucleates assembly of the head domain of the 30S subunit. Is located at the subunit interface close to the decoding center, probably blocks exit of the E-site tRNA. This is Small ribosomal subunit protein uS7 from Streptococcus pyogenes serotype M1.